A 508-amino-acid polypeptide reads, in one-letter code: Citrate lyase alpha chain (508 aa).

In terms of assembly, oligomer with a subunit composition of (alpha,beta,gamma)6.

The protein resides in the cytoplasm. It carries out the reaction citrate = oxaloacetate + acetate. The catalysed reaction is citrate + acetyl-CoA = (3S)-citryl-CoA + acetate. Functionally, represents a citrate:acetyl-ACP transferase. This Klebsiella pneumoniae protein is Citrate lyase alpha chain (citF).